Here is a 59-residue protein sequence, read N- to C-terminus: Small ribosomal subunit protein bS21 (59 aa).

Residues 40-59 form a disordered region; sequence KPSVKRKKKSEAARKRKSFR. A compositionally biased stretch (basic residues) spans 43-59; the sequence is VKRKKKSEAARKRKSFR.

This sequence belongs to the bacterial ribosomal protein bS21 family.

This Desulforamulus reducens (strain ATCC BAA-1160 / DSM 100696 / MI-1) (Desulfotomaculum reducens) protein is Small ribosomal subunit protein bS21.